Here is a 224-residue protein sequence, read N- to C-terminus: PKHD-type hydroxylase KPN78578_12210 (224 aa).

One can recognise a Fe2OG dioxygenase domain in the interval 77 to 176 (TISAPLFNRY…RQASFLWIQS (100 aa)). Positions 95, 97, and 157 each coordinate Fe cation. Residue Arg-167 participates in 2-oxoglutarate binding.

It depends on Fe(2+) as a cofactor. The cofactor is L-ascorbate.

This is PKHD-type hydroxylase KPN78578_12210 from Klebsiella pneumoniae subsp. pneumoniae (strain ATCC 700721 / MGH 78578).